Here is a 184-residue protein sequence, read N- to C-terminus: Ribosome-recycling factor (184 aa).

It belongs to the RRF family.

It is found in the cytoplasm. Its function is as follows. Responsible for the release of ribosomes from messenger RNA at the termination of protein biosynthesis. May increase the efficiency of translation by recycling ribosomes from one round of translation to another. This chain is Ribosome-recycling factor, found in Borrelia turicatae (strain 91E135).